A 393-amino-acid chain; its full sequence is MAATVRPLEKYRRIVIKIGSALLVDRKSGLKKSWLDAMCVDIAALKAKGVEVLVVSSGAIALGRTVLNLPAGALKLEESQAAAAVGQIALARAWSESLSTDQIIAGQILLTLGDTEERRRYLNARATINQLLKLGSVPIINENDTVATTEIRYGDNDRLAARVATMVGADLLVLLSDIDGLYTAPPHLDPQARFLETIAEITPEIEAMAGGAASELSRGGMRTKIDAGKIATTAGCAMIIASGKPEHPLKAIEAGARSSWFAPSGSPVTARKTWIAGQLLPAGSIAIDAGAETALRSGKSLLPAGVRQVTGTFSRGDTIAILNASGREIARGLAGYDADDARQIAGKKSAEIAAILGYAGRTAMVHRDDMVMTAPSGARSEEGGNEKKGKLHA.

Lysine 17 contacts ATP. Residues serine 57, aspartate 144, and asparagine 156 each contribute to the substrate site. Serine 176–aspartate 177 is an ATP binding site. The region spanning alanine 282 to alanine 359 is the PUA domain. The tract at residues alanine 374–alanine 393 is disordered. The segment covering arginine 379–alanine 393 has biased composition (basic and acidic residues).

Belongs to the glutamate 5-kinase family.

It localises to the cytoplasm. The catalysed reaction is L-glutamate + ATP = L-glutamyl 5-phosphate + ADP. It participates in amino-acid biosynthesis; L-proline biosynthesis; L-glutamate 5-semialdehyde from L-glutamate: step 1/2. Catalyzes the transfer of a phosphate group to glutamate to form L-glutamate 5-phosphate. This Sinorhizobium fredii (strain NBRC 101917 / NGR234) protein is Glutamate 5-kinase.